The following is a 398-amino-acid chain: MQKDASLSGFLPSFQHFATQAIHVGQEPEQWNSRAVVLPISLATTFKQDFPGQSSGFEYSRSGNPTRNCLEKAVAALDGAKHSLAFASGLAATITITHLLKAGDEIICMDEVYGGTNRYFRRVASEFGLKISFVDCSKTKLLEAAITPQTKLVWIETPTNPTLKLADIGACAQIVHKRGDIILVVDNTFMSAYFQRPLALGADICMCSATKYMNGHSDVVMGLVSVNSDDLNSRLRFLQNSLGAVPSPFDCYLCCRGLKTLQVRMEKHFKNGMAVARFLETNPRVEKVVYPGLPSHPQHELAKRQCSGCPGMVSFYIKGALQHAKAFLKNLKLFTLAESLGGYESLAELPAIMTHASVPEKDRATLGINDTLIRLSVGLEDEQDLLEDLDRALKAAHP.

Substrate contacts are provided by Arg-61, Tyr-113, and Arg-118. At Lys-211 the chain carries N6-(pyridoxal phosphate)lysine. Glu-338 serves as a coordination point for substrate.

Belongs to the trans-sulfuration enzymes family. As to quaternary structure, homotetramer. Interacts with CALM in a calcium-dependent manner. It depends on pyridoxal 5'-phosphate as a cofactor. As to expression, detected in liver and kidney, and at lower levels in small intestine (at protein level). Highly expressed in liver, kidney and lung, detected at lower levels in stomach, small intestine and adipose tissue, and hardly found in heart, bone, and thymus.

It localises to the cytoplasm. The enzyme catalyses L,L-cystathionine + H2O = 2-oxobutanoate + L-cysteine + NH4(+). The catalysed reaction is L-cysteine + H2O = hydrogen sulfide + pyruvate + NH4(+) + H(+). It carries out the reaction L-homocysteine + H2O = 2-oxobutanoate + hydrogen sulfide + NH4(+) + H(+). It catalyses the reaction L-homoserine = 2-oxobutanoate + NH4(+). The enzyme catalyses L-selenocystathionine + H2O = L-selenocysteine + 2-oxobutanoate + NH4(+). It participates in amino-acid biosynthesis; L-cysteine biosynthesis; L-cysteine from L-homocysteine and L-serine: step 2/2. With respect to regulation, activated by calmodulin in the presence of calcium ions. Functionally, catalyzes the last step in the trans-sulfuration pathway from L-methionine to L-cysteine in a pyridoxal-5'-phosphate (PLP)-dependent manner, which consists on cleaving the L,L-cystathionine molecule into L-cysteine, ammonia and 2-oxobutanoate. Part of the L-cysteine derived from the trans-sulfuration pathway is utilized for biosynthesis of the ubiquitous antioxidant glutathione. Besides its role in the conversion of L-cystathionine into L-cysteine, it utilizes L-cysteine and L-homocysteine as substrates (at much lower rates than L,L-cystathionine) to produce hydrogen sulfide (H2S). In vitro, it converts two L-cysteine molecules into lanthionine and H2S, and two L-homocysteine molecules to homolanthionine and H2S, which can be particularly relevant under conditions of severe hyperhomocysteinemia. Lanthionine and homolanthionine are structural homologs of L,L-cystathionine that differ by the absence or presence of an extra methylene group, respectively. Acts as a cysteine-protein sulfhydrase by mediating sulfhydration of target proteins: sulfhydration consists of converting -SH groups into -SSH on specific cysteine residues of target proteins such as GAPDH, PTPN1 and NF-kappa-B subunit RELA, thereby regulating their function. By generating the gasotransmitter H2S, it participates in a number of physiological processes such as vasodilation, bone protection, and inflammation. Plays an essential role in myogenesis by contributing to the biogenesis of H2S in skeletal muscle tissue. Can also accept homoserine as substrate. Catalyzes the elimination of selenocystathionine (which can be derived from the diet) to yield selenocysteine, ammonia and 2-oxobutanoate. The protein is Cystathionine gamma-lyase (Cth) of Mus musculus (Mouse).